A 334-amino-acid chain; its full sequence is Porphobilinogen deaminase (334 aa).

An S-(dipyrrolylmethanemethyl)cysteine modification is found at Cys-255.

Belongs to the HMBS family. In terms of assembly, monomer. Requires dipyrromethane as cofactor.

The enzyme catalyses 4 porphobilinogen + H2O = hydroxymethylbilane + 4 NH4(+). The protein operates within porphyrin-containing compound metabolism; protoporphyrin-IX biosynthesis; coproporphyrinogen-III from 5-aminolevulinate: step 2/4. In terms of biological role, tetrapolymerization of the monopyrrole PBG into the hydroxymethylbilane pre-uroporphyrinogen in several discrete steps. The chain is Porphobilinogen deaminase from Burkholderia orbicola (strain MC0-3).